The sequence spans 301 residues: Homoserine O-acetyltransferase (301 aa).

The Acyl-thioester intermediate role is filled by cysteine 142. Substrate is bound by residues lysine 163 and serine 192. Histidine 235 serves as the catalytic Proton acceptor. The active site involves glutamate 237. Arginine 249 lines the substrate pocket.

Belongs to the MetA family.

Its subcellular location is the cytoplasm. It catalyses the reaction L-homoserine + acetyl-CoA = O-acetyl-L-homoserine + CoA. It participates in amino-acid biosynthesis; L-methionine biosynthesis via de novo pathway; O-acetyl-L-homoserine from L-homoserine: step 1/1. Its function is as follows. Transfers an acetyl group from acetyl-CoA to L-homoserine, forming acetyl-L-homoserine. This Bacillus cereus (strain AH187) protein is Homoserine O-acetyltransferase.